We begin with the raw amino-acid sequence, 203 residues long: Outer-membrane lipoprotein carrier protein (203 aa).

Positions 1-21 are cleaved as a signal peptide; it reads MKKMAIACALLSSVVASSVWA. The disordered stretch occupies residues 178–203; the sequence is QQNGAVEPSKFTFTPPQGVTIDDQRK.

This sequence belongs to the LolA family. Monomer.

It localises to the periplasm. Its function is as follows. Participates in the translocation of lipoproteins from the inner membrane to the outer membrane. Only forms a complex with a lipoprotein if the residue after the N-terminal Cys is not an aspartate (The Asp acts as a targeting signal to indicate that the lipoprotein should stay in the inner membrane). The sequence is that of Outer-membrane lipoprotein carrier protein from Salmonella typhi.